A 673-amino-acid polypeptide reads, in one-letter code: UvrABC system protein B (673 aa).

One can recognise a Helicase ATP-binding domain in the interval 26–414 (EGLEDGLAHQ…GDEVVDQVVR (389 aa)). 39–46 (GVTGSGKT) contacts ATP. The Beta-hairpin signature appears at 92–115 (YYDYYQPEAYVPSSDTFIEKDASI). In terms of domain architecture, Helicase C-terminal spans 431–597 (QVDDLLSEIR…GLNKKVVDIL (167 aa)). In terms of domain architecture, UVR spans 633-668 (QQKIHELEGQMMQHAQNLEFEEAAQIRDQLHQLREL).

Belongs to the UvrB family. In terms of assembly, forms a heterotetramer with UvrA during the search for lesions. Interacts with UvrC in an incision complex.

The protein localises to the cytoplasm. In terms of biological role, the UvrABC repair system catalyzes the recognition and processing of DNA lesions. A damage recognition complex composed of 2 UvrA and 2 UvrB subunits scans DNA for abnormalities. Upon binding of the UvrA(2)B(2) complex to a putative damaged site, the DNA wraps around one UvrB monomer. DNA wrap is dependent on ATP binding by UvrB and probably causes local melting of the DNA helix, facilitating insertion of UvrB beta-hairpin between the DNA strands. Then UvrB probes one DNA strand for the presence of a lesion. If a lesion is found the UvrA subunits dissociate and the UvrB-DNA preincision complex is formed. This complex is subsequently bound by UvrC and the second UvrB is released. If no lesion is found, the DNA wraps around the other UvrB subunit that will check the other stand for damage. The chain is UvrABC system protein B from Salmonella paratyphi A (strain ATCC 9150 / SARB42).